The sequence spans 618 residues: Nuclear cap-binding protein subunit 3 (618 aa).

Residues 1–53 form a disordered region; it reads MAAVRGLRVSVKAGGGAEPEPMEVEEGEVEAAAGRTSPVEATADQTSPREVVP. The span at 20–29 shows a compositional bias: acidic residues; the sequence is EPMEVEEGEV. Positions 117-178 are RNA recognition motif (RRM) domain; that stretch reads ETLYICGVDE…LSSKPTNEKG (62 aa). The short motif at 146–149 is the WLDD motif; essential for 7-methylguanosine-containing mRNA cap binding element; that stretch reads WLDD. 3 disordered regions span residues 170–250, 342–366, and 426–618; these read SSKP…DLRP, PEEP…DDRV, and QLKT…DTDS. Residues 174–188 show a composition bias toward basic and acidic residues; sequence TNEKGQRKKDGEHRS. A compositionally biased stretch (acidic residues) spans 205-223; it reads DETEEGEVEEDNPNDAEVE. A compositionally biased stretch (polar residues) spans 231 to 240; it reads PPETLSQAEQ. A compositionally biased stretch (acidic residues) spans 344 to 365; the sequence is EPIEEEEEEEEEEEEDMDEDDR. Residues 436 to 450 show a composition bias toward polar residues; it reads SDSAGNSVKSRIGSK. The segment covering 451–468 has biased composition (basic and acidic residues); that stretch reads SHSEKPADVRLILEEKRQ. The span at 469–481 shows a compositional bias: low complexity; that stretch reads STASRQQSSSSGK. Composition is skewed to basic and acidic residues over residues 507-517, 550-562, and 583-596; these read SRREPLSDVHS, PKEK…KSGE, and IKEK…KSRL. The span at 609 to 618 shows a compositional bias: low complexity; that stretch reads ESSSGSDTDS.

It belongs to the NCBP3 family. As to quaternary structure, component of an alternative cap-binding complex (CBC) composed of NCBP1/CBP80 and NCBP3.

It is found in the nucleus. It localises to the cytoplasm. Functionally, associates with NCBP1/CBP80 to form an alternative cap-binding complex (CBC) which plays a key role in mRNA export. NCBP3 serves as adapter protein linking the capped RNAs (m7GpppG-capped RNA) to NCBP1/CBP80. Unlike the conventional CBC with NCBP2 which binds both small nuclear RNA (snRNA) and messenger (mRNA) and is involved in their export from the nucleus, the alternative CBC with NCBP3 does not bind snRNA and associates only with mRNA thereby playing a role in only mRNA export. The protein is Nuclear cap-binding protein subunit 3 of Xenopus laevis (African clawed frog).